Consider the following 302-residue polypeptide: Phospho-N-acetylmuramoyl-pentapeptide-transferase (302 aa).

The next 10 helical transmembrane spans lie at 1-21 (MIAASFLLNLLIYPFLINLFR), 42-62 (GTPTMGGILFVLIGLLFGVLS), 67-87 (VILTGAFLFFLIGFLDDFLSI), 101-121 (ALLQIAAASVVIAFSQPETAV), 123-143 (FFGIKLEMGAWYYLLALIVIV), 154-174 (GLDGLAGWVYISGAIPYWFFL), 178-198 (GFSENIIILLSAGVLAFLIFN), 204-224 (IFMGDTGSIALGGTLGVVSVL), 229-249 (FYLIVFFPILVVETLSVILQI), and 279-299 (IVAVFTIFNLISSLIALEVFG).

Belongs to the glycosyltransferase 4 family. MraY subfamily. Requires Mg(2+) as cofactor.

The protein resides in the cell inner membrane. It catalyses the reaction UDP-N-acetyl-alpha-D-muramoyl-L-alanyl-gamma-D-glutamyl-meso-2,6-diaminopimeloyl-D-alanyl-D-alanine + di-trans,octa-cis-undecaprenyl phosphate = di-trans,octa-cis-undecaprenyl diphospho-N-acetyl-alpha-D-muramoyl-L-alanyl-D-glutamyl-meso-2,6-diaminopimeloyl-D-alanyl-D-alanine + UMP. It participates in cell wall biogenesis; peptidoglycan biosynthesis. Its function is as follows. Catalyzes the initial step of the lipid cycle reactions in the biosynthesis of the cell wall peptidoglycan: transfers peptidoglycan precursor phospho-MurNAc-pentapeptide from UDP-MurNAc-pentapeptide onto the lipid carrier undecaprenyl phosphate, yielding undecaprenyl-pyrophosphoryl-MurNAc-pentapeptide, known as lipid I. This chain is Phospho-N-acetylmuramoyl-pentapeptide-transferase, found in Thermotoga neapolitana (strain ATCC 49049 / DSM 4359 / NBRC 107923 / NS-E).